The sequence spans 780 residues: Pendrin (780 aa).

Residues 1–87 (MAAPGGRSEP…YRVKEWLLSD (87 aa)) lie on the Cytoplasmic side of the membrane. A helical transmembrane segment spans residues 88–108 (VISGVSTGLVATLQGMAYALL). Ala-109 is a topological domain (extracellular). A helical membrane pass occupies residues 110 to 130 (AVPVGYGLYSAFFPILTYFIF). Residues 131–135 (GTSRH) lie on the Cytoplasmic side of the membrane. A helical transmembrane segment spans residues 136–156 (ISVGPFPVVSLMVGSVVLSMA). Over 157 to 191 (PDEHFLVSSSNGTVLNTTMIDTAARDTARVLIASA) the chain is Extracellular. A helical membrane pass occupies residues 192–212 (LTLLVGIIQLIFGGLQIGFIV). Over 213 to 218 (RYLADP) the chain is Cytoplasmic. Residues 219-239 (LVGGFTTAAAFQVLVSQLKIV) traverse the membrane as a helical segment. At 240–263 (LNVSTKNYNGVLSIIYTLVEIFQN) the chain is on the extracellular side. Residues 264–284 (IGDTNLADFTAGLLTIVVCMA) traverse the membrane as a helical segment. Residues 285 to 295 (VKELNDRFRHK) are Cytoplasmic-facing. The chain crosses the membrane as a helical span at residues 296–316 (IPVPIPIEVIVTIIATAISYG). At 317–344 (ANLEKNYNAGIVKSIPRGFLPPELPPVS) the chain is on the extracellular side. A helical membrane pass occupies residues 345–365 (LFSEMLAASFSIAVVAYAIAV). Residues 366-384 (SVGKVYATKYDYTIDGNQE) lie on the Cytoplasmic side of the membrane. Residues 385–405 (FIAFGISNIFSGFFSCFVATT) traverse the membrane as a helical segment. At 406–421 (ALSRTAVQESTGGKTQ) the chain is on the extracellular side. The chain crosses the membrane as a helical span at residues 422–442 (VAGIISAAIVMIAILALGKLL). The Cytoplasmic segment spans residues 443 to 448 (EPLQKS). Residues 449–469 (VLAAVVIANLKGMFMQLCDIP) traverse the membrane as a helical segment. The Extracellular portion of the chain corresponds to 470 to 486 (RLWRQNKIDAVIWVFTC). The helical transmembrane segment at 487 to 507 (IVSIILGLDLGLLAGLIFGLL) threads the bilayer. Residues 508-780 (TVVLRVQFPS…QDEAMRTLAS (273 aa)) lie on the Cytoplasmic side of the membrane. The region spanning 535 to 729 (NYKNIEEPQG…LTVHDAILYL (195 aa)) is the STAS domain.

Belongs to the SLC26A/SulP transporter (TC 2.A.53) family. As to quaternary structure, interacts with IQGAP1; this interaction enhances the chloride-bicarbonate exchange activity of SLC26A4. In terms of tissue distribution, highly expressed in the kidney (at protein level). High expression in adult thyroid, lower expression in adult and fetal kidney and fetal brain. Not expressed in other tissues.

The protein localises to the cell membrane. The protein resides in the apical cell membrane. It carries out the reaction chloride(in) = chloride(out). The catalysed reaction is iodide(out) = iodide(in). It catalyses the reaction hydrogencarbonate(in) + chloride(out) = hydrogencarbonate(out) + chloride(in). The enzyme catalyses iodide(in) + hydrogencarbonate(out) = iodide(out) + hydrogencarbonate(in). It carries out the reaction iodide(in) + chloride(out) = iodide(out) + chloride(in). The catalysed reaction is formate(in) + chloride(out) = formate(out) + chloride(in). Functionally, sodium-independent transporter of chloride and iodide. Mediates electroneutral chloride-bicarbonate, chloride-iodide and chloride-formate exchange with 1:1 stoichiometry. Mediates electroneutral iodide-bicarbonate exchange. This chain is Pendrin (SLC26A4), found in Homo sapiens (Human).